Consider the following 154-residue polypeptide: Putative esterase AF_2264 (154 aa).

The protein belongs to the thioesterase PaaI family.

This chain is Putative esterase AF_2264, found in Archaeoglobus fulgidus (strain ATCC 49558 / DSM 4304 / JCM 9628 / NBRC 100126 / VC-16).